A 456-amino-acid polypeptide reads, in one-letter code: Cell cycle checkpoint control protein Rad9 (456 aa).

The short motif at 300 to 302 (KRK) is the Nuclear localization signal element.

The protein belongs to the rad9 family. In terms of assembly, component of the 9-1-1 checkpoint clamp complex consisting of Rad9 isoform A, Rad1 and Hus1-like; the interaction with Hus1-like is direct. Does not interact directly with Rad1; this interaction is probably mediated by Hus1-like. This complex probably also forms with Rad9 isoform B, however 9-1-1 complex containing Rad9 isoform A localizes to the nuclear periphery. Interacts with Brca2. As to expression, expressed in ovary.

It is found in the nucleus envelope. It localises to the nucleus. In terms of biological role, component of the Rad9-Rad1-Hus1 (9-1-1) checkpoint clamp complex. Its function is as follows. Targets the 9-1-1 complex to the nuclear periphery. Targeting to the nuclear periphery is disrupted in the presence of persistent double stranded break DNA damage, possibly as a function of the meiotic checkpoint. This chain is Cell cycle checkpoint control protein Rad9, found in Drosophila melanogaster (Fruit fly).